A 766-amino-acid chain; its full sequence is Exocyst complex component 6 (766 aa).

A coiled-coil region spans residues 28–90; it reads NTKQIGDQLE…SLDTSLRQIS (63 aa).

This sequence belongs to the SEC15 family. In terms of assembly, the exocyst complex is composed of Sec3/Exoc1, Sec5/Exoc2, Sec6/Exoc3, Sec8/Exoc4, Sec10/Exoc5, Sec15/Exoc6, Exo70/Exoc7 and Exo84/Exoc8. Interacts with RAB3, RAB8, RAB11 and RAB27. Detected in developing rhabdomeres in photoreceptor cells.

The protein resides in the cell projection. The protein localises to the rhabdomere. Component of the exocyst complex involved in the docking of exocytic vesicles with fusion sites on the plasma membrane. This Drosophila melanogaster (Fruit fly) protein is Exocyst complex component 6.